The primary structure comprises 1077 residues: Response regulator SSK1 (1077 aa).

The Response regulatory domain occupies 854-1000; it reads NVLIVEDNII…FLERKVMEWG (147 aa). Asp-903 carries the post-translational modification 4-aspartylphosphate.

Belongs to the SSK1 family.

The protein resides in the cytoplasm. Functionally, two-domain response regulator protein in the two-component signal transduction system of the HOG1 pathway. Involved in multi-stress responses and is essential for conidiation, secondary metabolism, autophagy and endocyrosis. In addition, regulates mycelial growth, cell nucleus development, septum formation, and organelle development. Also regulates trap formation and thus plays a crucial role in pathogenicity. The polypeptide is Response regulator SSK1 (Arthrobotrys oligospora (strain ATCC 24927 / CBS 115.81 / DSM 1491) (Nematode-trapping fungus)).